A 155-amino-acid polypeptide reads, in one-letter code: Small ribosomal subunit protein uS7 (155 aa).

This sequence belongs to the universal ribosomal protein uS7 family. Part of the 30S ribosomal subunit. Contacts proteins S9 and S11.

In terms of biological role, one of the primary rRNA binding proteins, it binds directly to 16S rRNA where it nucleates assembly of the head domain of the 30S subunit. Is located at the subunit interface close to the decoding center, probably blocks exit of the E-site tRNA. This is Small ribosomal subunit protein uS7 from Desulforapulum autotrophicum (strain ATCC 43914 / DSM 3382 / VKM B-1955 / HRM2) (Desulfobacterium autotrophicum).